A 1623-amino-acid polypeptide reads, in one-letter code: ABC transporter C family member 2 (1623 aa).

9 helical membrane-spanning segments follow: residues 37–57 (FVLGISQLVLLVLCLYRIWLA), 76–96 (FLALLAAYATAEPLFRLIMGI), 109–129 (FEAFGLGVKAFAWGAVMVMIL), 145–165 (FAVIYALVGDMVLLNLVLSVK), 172–192 (VLYLYTSEVGAQVLFGILLFM), 336–356 (AWMGYIYAFSIFVGVVFGVLC), 440–460 (VASLIGALLLVLMFPLQTVII), 527–547 (FILNSIPVLVTIVSFGVFTLL), and 557–577 (FTSLSLFAVLRFPLFMLPNII). The ABC transmembrane type-1 1 domain maps to 302–582 (FWWGGFWKIG…LPNIITQVVN (281 aa)). Residues 614 to 838 (ISIRNGYFSW…GPLFQRLMEN (225 aa)) form the ABC transporter 1 domain. Residue 649-656 (GSTGEGKT) participates in ATP binding. The segment at 842–890 (VEEYSEENGEAEADQTAEQPVANGNTNGLQMDGSDDKKSKEGNKKGGKS) is disordered. Acidic residues predominate over residues 845–856 (YSEENGEAEADQ). The segment covering 857-870 (TAEQPVANGNTNGL) has biased composition (polar residues). Positions 875–885 (SDDKKSKEGNK) are enriched in basic and acidic residues. Transmembrane regions (helical) follow at residues 914–934 (ALGGAWVVMMLLLCYVLTEVF), 955–975 (GPLFYNLIYALLSFGQVLVTL), 1032–1054 (AVFVNMFMGQVSQLLSTVVLIGI), 1058–1077 (LSLWAIMPLLVLFYGAYLYY), 1143–1163 (LGIRLETLGGLMIWLTASFAV), and 1177–1197 (STMGLLLSYALNITSLLTGVL). Residues 921–1205 (VMMLLLCYVL…VLRLASLAEN (285 aa)) enclose the ABC transmembrane type-1 2 domain. The segment at 1236–1251 (WPSSGSIKFEDVVLRY) is interaction with calmodulin and FKP42/TWD1. Positions 1242 to 1476 (IKFEDVVLRY…EGSSFSKMVQ (235 aa)) constitute an ABC transporter 2 domain. Residue 1276 to 1283 (GRTGAGKS) coordinates ATP.

This sequence belongs to the ABC transporter superfamily. ABCC family. Conjugate transporter (TC 3.A.1.208) subfamily. In terms of assembly, interacts with FKBP42/TWD1 and probably with calmodulin (CaM). As to expression, ubiquitous, at low levels.

It is found in the vacuole membrane. The catalysed reaction is ATP + H2O + xenobioticSide 1 = ADP + phosphate + xenobioticSide 2.. With respect to regulation, reciprocal promotion of DNP-GS and E(2)17betaG uptake. E(2)17betaG uptake is also stimulated by GSH and S-methyl-glutathione (S-methyl-GS), and, to a lower extent, by GSSG and C3G-GS. Metolachlor-GS and decyl-GS slightly inhibit E(2)17betaG uptake. Pump for glutathione S-conjugates. Mediates the transport of S-conjugates such as GSH, S-(2,4-dinitrophenyl)-glutathione (DNP-GS), GSSG, cyanidin 3-glucoside-GS (C3G-GS) and metolachlor-GS (MOC-GS), glucuronides such as 17-beta-estradiol 17-(beta-D-glucuronide) (E(2)17betaG), and of the chlorophyll catabolite such as B.napus nonfluorescent chlorophyll catabolite (Bn-NCC-1). This is ABC transporter C family member 2 (ABCC2) from Arabidopsis thaliana (Mouse-ear cress).